Here is a 174-residue protein sequence, read N- to C-terminus: RNA pyrophosphohydrolase (174 aa).

Residues Gly6–Lys149 enclose the Nudix hydrolase domain. The short motif at Gly38–Gly59 is the Nudix box element.

It belongs to the Nudix hydrolase family. RppH subfamily. A divalent metal cation serves as cofactor.

Accelerates the degradation of transcripts by removing pyrophosphate from the 5'-end of triphosphorylated RNA, leading to a more labile monophosphorylated state that can stimulate subsequent ribonuclease cleavage. This Photobacterium profundum (strain SS9) protein is RNA pyrophosphohydrolase.